We begin with the raw amino-acid sequence, 492 residues long: UDP-glucosyl transferase 73DL1 (492 aa).

The Proton acceptor role is filled by H27. D131 functions as the Charge relay in the catalytic mechanism. Residues W352, V353, H370, T375, E378, and Y392 each contribute to the UDP site.

It belongs to the UDP-glycosyltransferase family. Mainly expressed in flowers, flower buds and young leaves, and, to a lesser extent, in old leaves, stems and roots.

It participates in secondary metabolite biosynthesis; terpenoid biosynthesis. Component of the oleanane-type triterpene saponins (e.g. saponarioside A and saponarioside B) biosynthetic pathway, leading to the production of natural products with detergent properties used as traditional sources of soap. A glycosyltransferase that mediates the conversion of QA-mono to QA-di via the elongation of the C-3 sugar chain with a D-galactose. This is UDP-glucosyl transferase 73DL1 from Saponaria officinalis (Common soapwort).